Consider the following 235-residue polypeptide: MGQKVHPHGIRLGIVKPWSSTWFANTQDFADNLEGDFKVRKFLNKELASASVSRITIERPAKSIRVTIHTARPGIVIGKKGEDVEKLRNAVSKIAGVPAQINIAEVKKPELDAKLVADSIASQLERRVMFRRAMKRAVQSAMRLGAKGIKVEVSGRLGGAEIARSEWYREGRVPLHTLRADIDYNTAEAHTTYGVIGVKVWIFKGEILGGMAAVAQSEQQPADKPKKAPRGKGRK.

The KH type-2 domain maps to 39–107; sequence VRKFLNKELA…PAQINIAEVK (69 aa). The segment at 215–235 is disordered; it reads AQSEQQPADKPKKAPRGKGRK.

It belongs to the universal ribosomal protein uS3 family. As to quaternary structure, part of the 30S ribosomal subunit. Forms a tight complex with proteins S10 and S14.

Binds the lower part of the 30S subunit head. Binds mRNA in the 70S ribosome, positioning it for translation. The chain is Small ribosomal subunit protein uS3 from Haemophilus influenzae (strain ATCC 51907 / DSM 11121 / KW20 / Rd).